A 411-amino-acid chain; its full sequence is 1-deoxy-D-xylulose 5-phosphate reductoisomerase (411 aa).

8 residues coordinate NADPH: threonine 23, glycine 24, serine 25, isoleucine 26, glycine 49, arginine 50, asparagine 51, and asparagine 137. Lysine 138 serves as a coordination point for 1-deoxy-D-xylulose 5-phosphate. Residue glutamate 139 participates in NADPH binding. Aspartate 163 contacts Mn(2+). 1-deoxy-D-xylulose 5-phosphate is bound by residues serine 164, glutamate 165, serine 199, and histidine 222. Glutamate 165 is a Mn(2+) binding site. Glycine 228 lines the NADPH pocket. 1-deoxy-D-xylulose 5-phosphate contacts are provided by serine 235, asparagine 240, lysine 241, and glutamate 244. Residue glutamate 244 coordinates Mn(2+).

It belongs to the DXR family. The cofactor is Mg(2+). Mn(2+) is required as a cofactor.

The enzyme catalyses 2-C-methyl-D-erythritol 4-phosphate + NADP(+) = 1-deoxy-D-xylulose 5-phosphate + NADPH + H(+). It functions in the pathway isoprenoid biosynthesis; isopentenyl diphosphate biosynthesis via DXP pathway; isopentenyl diphosphate from 1-deoxy-D-xylulose 5-phosphate: step 1/6. Its function is as follows. Catalyzes the NADPH-dependent rearrangement and reduction of 1-deoxy-D-xylulose-5-phosphate (DXP) to 2-C-methyl-D-erythritol 4-phosphate (MEP). The sequence is that of 1-deoxy-D-xylulose 5-phosphate reductoisomerase from Mannheimia succiniciproducens (strain KCTC 0769BP / MBEL55E).